We begin with the raw amino-acid sequence, 504 residues long: Carnosic acid synthase (504 aa).

A helical transmembrane segment spans residues 4–24 (FIILSLAFIAAWVVYSRWSEY). Cysteine 447 serves as a coordination point for heme.

Belongs to the cytochrome P450 family. Heme serves as cofactor. In terms of tissue distribution, expressed in glandular trichomes of young leaves.

Its subcellular location is the membrane. The enzyme catalyses 11-hydroxyferruginol + 3 reduced [NADPH--hemoprotein reductase] + 3 O2 = carnosate + 3 oxidized [NADPH--hemoprotein reductase] + 4 H2O + 4 H(+). The catalysed reaction is miltiradiene + 2 reduced [NADPH--hemoprotein reductase] + 2 O2 = miltiradien-20-al + 2 oxidized [NADPH--hemoprotein reductase] + 3 H2O + 2 H(+). It carries out the reaction ferruginol + 3 reduced [NADPH--hemoprotein reductase] + 3 O2 = pisiferate + 3 oxidized [NADPH--hemoprotein reductase] + 4 H2O + 4 H(+). It participates in secondary metabolite biosynthesis; terpenoid biosynthesis. Monooxygenase involved in the biosynthesis of carnosate, a potent antioxidant labdane-related diterpene natural products. Catalyzes the oxidation of 11-hydroxyferruginol to produce carnosate. Mediates the conversion of miltiradien into miltiradien-20-al. Also involved in the production of pisiferic acid and derivative products from ferruginol. In Rosmarinus officinalis (Rosemary), this protein is Carnosic acid synthase.